The chain runs to 392 residues: Glutamyl-tRNA(Gln) amidotransferase subunit D (392 aa).

In terms of domain architecture, Asparaginase/glutaminase spans 68–391; that stretch reads GNLGFIYTGG…DGIKKEMKRL (324 aa). Residues T78, T152, D153, and K229 contribute to the active site.

It belongs to the asparaginase 1 family. GatD subfamily. Heterodimer of GatD and GatE.

The enzyme catalyses L-glutamyl-tRNA(Gln) + L-glutamine + ATP + H2O = L-glutaminyl-tRNA(Gln) + L-glutamate + ADP + phosphate + H(+). Its function is as follows. Allows the formation of correctly charged Gln-tRNA(Gln) through the transamidation of misacylated Glu-tRNA(Gln) in organisms which lack glutaminyl-tRNA synthetase. The reaction takes place in the presence of glutamine and ATP through an activated gamma-phospho-Glu-tRNA(Gln). The GatDE system is specific for glutamate and does not act on aspartate. In Nanoarchaeum equitans (strain Kin4-M), this protein is Glutamyl-tRNA(Gln) amidotransferase subunit D (gatD).